Here is a 1000-residue protein sequence, read N- to C-terminus: Exportin-T (1000 aa).

The protein belongs to the exportin family.

The protein resides in the nucleus. It localises to the cytoplasm. Its function is as follows. tRNA nucleus export receptor which facilitates tRNA translocation across the nuclear pore complex. Involved in pre-tRNA splicing, probably by affecting the interaction of pre-tRNA with splicing endonuclease. This chain is Exportin-T (LOS1), found in Debaryomyces hansenii (strain ATCC 36239 / CBS 767 / BCRC 21394 / JCM 1990 / NBRC 0083 / IGC 2968) (Yeast).